We begin with the raw amino-acid sequence, 513 residues long: MKMASFLAFLLLNFRVCLLLLQLLMPHSAQFSVLGPSGPILAMVGEDADLPCHLFPTMSAETMELKWVSSSLRQVVNVYADGKEVEDRQSAPYRGRTSILRDGITAGKAALRIHNVTASDSGKYLCYFQDGDFYEKALVELKVAALGSDLHVDVKGYKDGGIHLECRSTGWYPQPQIQWSNNKGENIPTVEAPVVADGVGLYAVAASVIMRGSSGEGVSCTIRSSLLGLEKTASISIADPFFRSAQRWIAALAGTLPVLLLLLGGAGYFLWQQQEEKKTQFRKKKREQELREMAWSTMKQEQSTRVKLLEELRWRSIQYASRGERHSAYNEWKKALFKPADVILDPKTANPILLVSEDQRSVQRAKEPQDLPDNPERFNWHYCVLGCESFISGRHYWEVEVGDRKEWHIGVCSKNVQRKGWVKMTPENGFWTMGLTDGNKYRTLTEPRTNLKLPKPPKKVGVFLDYETGDISFYNAVDGSHIHTFLDVSFSEALYPVFRILTLEPTALTICPA.

A signal peptide spans 1–29 (MKMASFLAFLLLNFRVCLLLLQLLMPHSA). 2 consecutive Ig-like V-type domains span residues 30-139 (QFSV…KALV) and 145-236 (ALGS…ASIS). Residues 30–254 (QFSVLGPSGP…AQRWIAALAG (225 aa)) are Extracellular-facing. 2 disulfides stabilise this stretch: C52–C126 and C166–C220. Residue N115 is glycosylated (N-linked (GlcNAc...) asparagine). The chain crosses the membrane as a helical span at residues 255 to 271 (TLPVLLLLLGGAGYFLW). The Cytoplasmic segment spans residues 272 to 513 (QQQEEKKTQF…EPTALTICPA (242 aa)). In terms of domain architecture, B30.2/SPRY spans 322 to 513 (RGERHSAYNE…EPTALTICPA (192 aa)).

This sequence belongs to the immunoglobulin superfamily. BTN/MOG family. As to quaternary structure, homodimer. In terms of processing, N-glycosylated. Detected on T-cells, natural killer cells, dendritic cells and macrophages (at protein level). Ubiquitous. Highly expressed in heart, pancreas and lung, Moderately expressed in placenta, liver and muscle.

The protein localises to the cell membrane. In terms of biological role, plays a role in T-cell activation and in the adaptive immune response. Regulates the proliferation of activated T-cells. Regulates the release of cytokines and IFNG by activated T-cells. Mediates the response of T-cells toward infected and transformed cells that are characterized by high levels of phosphorylated metabolites, such as isopentenyl pyrophosphate. This Homo sapiens (Human) protein is Butyrophilin subfamily 3 member A1 (BTN3A1).